The chain runs to 445 residues: Chromosome partition protein MukF (445 aa).

The leucine-zipper stretch occupies residues L212 to I240.

The protein belongs to the MukF family. As to quaternary structure, interacts, and probably forms a ternary complex, with MukE and MukB via its C-terminal region. The complex formation is stimulated by calcium or magnesium. It is required for an interaction between MukE and MukB.

The protein resides in the cytoplasm. It localises to the nucleoid. In terms of biological role, involved in chromosome condensation, segregation and cell cycle progression. May participate in facilitating chromosome segregation by condensation DNA from both sides of a centrally located replisome during cell division. Not required for mini-F plasmid partitioning. Probably acts via its interaction with MukB and MukE. Overexpression results in anucleate cells. It has a calcium binding activity. The chain is Chromosome partition protein MukF from Mannheimia succiniciproducens (strain KCTC 0769BP / MBEL55E).